Consider the following 165-residue polypeptide: Alanine- and arginine-rich domain-containing protein (165 aa).

Residues 136–165 (QQLKKRQDQERASKPQSPQDEEMNPECGNA) form a disordered region.

The chain is Alanine- and arginine-rich domain-containing protein (Aard) from Rattus norvegicus (Rat).